We begin with the raw amino-acid sequence, 147 residues long: MVHLTDAEKSAVSCLWAKVNPDEVGGEALGRLLVVYPWTQRYFDSFGDLSSASAIMGNPKVKAHGKKVITAFNEGLKNLDNLKGTFASLSELHCDKLHVDPENFRLLGNAIVIVLGHHLGKDFTPAAQAAFQKVVAGVATALAHKYH.

Val2 bears the N-acetylvaline mark. Residues 3 to 147 (HLTDAEKSAV…VATALAHKYH (145 aa)) form the Globin domain. Lys18 bears the N6-succinyllysine mark. Tyr42 is subject to Phosphotyrosine. Phosphoserine is present on residues Ser45, Ser51, and Ser53. The residue at position 60 (Lys60) is an N6-succinyllysine. Heme b-binding residues include His64 and His93. At Arg105 the chain carries Asymmetric dimethylarginine. Thr124 bears the Phosphothreonine mark.

It belongs to the globin family. Heterotetramer of two alpha chains and two beta chains. In terms of tissue distribution, red blood cells.

Functionally, involved in oxygen transport from the lung to the various peripheral tissues. The sequence is that of Hemoglobin subunit beta-2 (Hbb-b2) from Mus musculus (Mouse).